Consider the following 413-residue polypeptide: NADH-quinone oxidoreductase subunit D (413 aa).

This sequence belongs to the complex I 49 kDa subunit family. As to quaternary structure, NDH-1 is composed of 14 different subunits. Subunits NuoB, C, D, E, F, and G constitute the peripheral sector of the complex.

Its subcellular location is the cell inner membrane. The enzyme catalyses a quinone + NADH + 5 H(+)(in) = a quinol + NAD(+) + 4 H(+)(out). Its function is as follows. NDH-1 shuttles electrons from NADH, via FMN and iron-sulfur (Fe-S) centers, to quinones in the respiratory chain. The immediate electron acceptor for the enzyme in this species is believed to be ubiquinone. Couples the redox reaction to proton translocation (for every two electrons transferred, four hydrogen ions are translocated across the cytoplasmic membrane), and thus conserves the redox energy in a proton gradient. In Rhodobacter capsulatus (Rhodopseudomonas capsulata), this protein is NADH-quinone oxidoreductase subunit D.